The following is a 677-amino-acid chain: WD repeat-containing protein 43 (677 aa).

6 WD repeats span residues Pro-11–Glu-51, His-57–Lys-119, Gly-124–Lys-163, Gly-166–Thr-205, His-207–Ser-259, and Thr-267–Lys-309. Ser-77 is modified (phosphoserine). A Glycyl lysine isopeptide (Lys-Gly) (interchain with G-Cter in SUMO1); alternate cross-link involves residue Lys-309. A Glycyl lysine isopeptide (Lys-Gly) (interchain with G-Cter in SUMO2); alternate cross-link involves residue Lys-309. Position 321 is a phosphothreonine (Thr-321). Residue Lys-384 forms a Glycyl lysine isopeptide (Lys-Gly) (interchain with G-Cter in SUMO1); alternate linkage. A Glycyl lysine isopeptide (Lys-Gly) (interchain with G-Cter in SUMO2); alternate cross-link involves residue Lys-384. Thr-394 carries the post-translational modification Phosphothreonine. A phosphoserine mark is found at Ser-399, Ser-431, Ser-437, and Ser-590. Disordered stretches follow at residues Ala-414–Met-445 and Ser-582–Glu-677. Over residues Ser-582 to Gly-592 the composition is skewed to polar residues. Residues Glu-600 to Glu-652 show a composition bias toward acidic residues. Positions Asp-653–Asn-663 are enriched in basic and acidic residues. Thr-656 carries the post-translational modification Phosphothreonine. Ser-658 is subject to Phosphoserine. The span at Gly-664–Glu-677 shows a compositional bias: acidic residues.

Belongs to the UTP5 family. In terms of assembly, part of the small subunit (SSU) processome, composed of more than 70 proteins and the RNA chaperone small nucleolar RNA (snoRNA) U3. May be a component of the proposed t-UTP subcomplex of the ribosomal small subunit (SSU) processome containing at least UTP4, WDR43, HEATR1, UTP15, WDR75. Binds to RNA; binding is required for its chromatin association. Interacts with CDK9, DDX21 and SUPT6H. Interacts with RNA polymerase II. Interacts directly with UTP4 and UTP15.

It is found in the nucleus. The protein resides in the nucleolus. The protein localises to the nucleolus fibrillar center. Its subcellular location is the nucleoplasm. Functionally, ribosome biogenesis factor that coordinates hyperactive transcription and ribogenesis. Part of the small subunit (SSU) processome, first precursor of the small eukaryotic ribosomal subunit. During the assembly of the SSU processome in the nucleolus, many ribosome biogenesis factors, an RNA chaperone and ribosomal proteins associate with the nascent pre-rRNA and work in concert to generate RNA folding, modifications, rearrangements and cleavage as well as targeted degradation of pre-ribosomal RNA by the RNA exosome. Involved in nucleolar processing of pre-18S ribosomal RNA. Required for optimal pre-ribosomal RNA transcription by RNA polymerase I. Essential for stem cell pluripotency and embryonic development. In the nucleoplasm, recruited by promoter-associated/nascent transcripts and transcription to active promoters where it facilitates releases of elongation factor P-TEFb and paused RNA polymerase II to allow transcription elongation and maintain high-level expression of its targets genes. This is WD repeat-containing protein 43 from Homo sapiens (Human).